The primary structure comprises 712 residues: Polyribonucleotide nucleotidyltransferase (712 aa).

Aspartate 487 and aspartate 493 together coordinate Mg(2+). A KH domain is found at 554-613 (PKIITMTINPDKIRDVIGPSGKQINKIIEETGVKIDIEQDGTVFISSINQEMNDKAKKII). The 69-residue stretch at 623-691 (GEIYEGKVKR…KQGRVNLSRK (69 aa)) folds into the S1 motif domain.

It belongs to the polyribonucleotide nucleotidyltransferase family. It depends on Mg(2+) as a cofactor.

Its subcellular location is the cytoplasm. The catalysed reaction is RNA(n+1) + phosphate = RNA(n) + a ribonucleoside 5'-diphosphate. Its function is as follows. Involved in mRNA degradation. Catalyzes the phosphorolysis of single-stranded polyribonucleotides processively in the 3'- to 5'-direction. The polypeptide is Polyribonucleotide nucleotidyltransferase (Bacillus cereus (strain AH820)).